A 241-amino-acid chain; its full sequence is Caffeoyl-CoA O-methyltransferase (241 aa).

Lys14 contributes to the substrate binding site. Residues Thr58, Glu80, 82–83, Ser88, Asp106, and Ala135 contribute to the S-adenosyl-L-methionine site; that span reads GV. Asp158 serves as a coordination point for substrate. Asp158 contacts a divalent metal cation. Residue Asp160 participates in S-adenosyl-L-methionine binding. Residues Asp184 and Asn185 each contribute to the a divalent metal cation site.

The protein belongs to the class I-like SAM-binding methyltransferase superfamily. Cation-dependent O-methyltransferase family. CCoAMT subfamily. A divalent metal cation is required as a cofactor.

It catalyses the reaction (E)-caffeoyl-CoA + S-adenosyl-L-methionine = (E)-feruloyl-CoA + S-adenosyl-L-homocysteine + H(+). It functions in the pathway aromatic compound metabolism; phenylpropanoid biosynthesis. Functionally, methylates caffeoyl-CoA to feruloyl-CoA and 5-hydroxyferuloyl-CoA to sinapoyl-CoA. Plays a role in the synthesis of feruloylated polysaccharides. Involved in the reinforcement of the plant cell wall. Also involved in the responding to wounding or pathogen challenge by the increased formation of cell wall-bound ferulic acid polymers. This is Caffeoyl-CoA O-methyltransferase from Stellaria longipes (Longstalk starwort).